The primary structure comprises 419 residues: Histidine--tRNA ligase (419 aa).

It belongs to the class-II aminoacyl-tRNA synthetase family. Homodimer.

Its subcellular location is the cytoplasm. It carries out the reaction tRNA(His) + L-histidine + ATP = L-histidyl-tRNA(His) + AMP + diphosphate + H(+). This is Histidine--tRNA ligase from Halothermothrix orenii (strain H 168 / OCM 544 / DSM 9562).